Consider the following 332-residue polypeptide: Fructose-1,6-bisphosphatase class 1 (332 aa).

Mg(2+) is bound by residues Glu89, Asp110, Leu112, and Asp113. Residues 113 to 116 (DGSS), Asn206, Tyr239, 257 to 259 (YLY), and Lys269 contribute to the substrate site. Mg(2+) is bound at residue Glu275.

This sequence belongs to the FBPase class 1 family. In terms of assembly, homotetramer. Mg(2+) is required as a cofactor.

It localises to the cytoplasm. It catalyses the reaction beta-D-fructose 1,6-bisphosphate + H2O = beta-D-fructose 6-phosphate + phosphate. Its pathway is carbohydrate biosynthesis; gluconeogenesis. The chain is Fructose-1,6-bisphosphatase class 1 from Salmonella arizonae (strain ATCC BAA-731 / CDC346-86 / RSK2980).